Here is a 208-residue protein sequence, read N- to C-terminus: LexA repressor (208 aa).

Positions 29 to 49 (VREICSAVGLSSTSTVHGHIS) form a DNA-binding region, H-T-H motif. Active-site for autocatalytic cleavage activity residues include S129 and K167.

The protein belongs to the peptidase S24 family. As to quaternary structure, homodimer.

It catalyses the reaction Hydrolysis of Ala-|-Gly bond in repressor LexA.. In terms of biological role, represses a number of genes involved in the response to DNA damage (SOS response), including recA and lexA. In the presence of single-stranded DNA, RecA interacts with LexA causing an autocatalytic cleavage which disrupts the DNA-binding part of LexA, leading to derepression of the SOS regulon and eventually DNA repair. This is LexA repressor from Limosilactobacillus reuteri (strain DSM 20016) (Lactobacillus reuteri).